The chain runs to 47 residues: Single-stranded DNA-binding protein (47 aa).

In terms of assembly, homodimer in the absence of DNA, monomer when binding DNA.

In terms of biological role, binds preferentially to single-stranded DNA and therefore, destabilizes double-stranded DNA. It is involved in DNA replication, repair and recombination. Binds ss-DNA as the replication fork advances and stimulates the replisome processivity and accuracy. This chain is Single-stranded DNA-binding protein (32), found in Escherichia coli (Bacteriophage RB6).